The primary structure comprises 394 residues: Protein STRICTOSIDINE SYNTHASE-LIKE 1 (394 aa).

The N-terminal stretch at 1–21 is a signal peptide; it reads MESLLLIAYAFLYLFLLSHEA. The segment covering 61 to 73 has biased composition (basic and acidic residues); that stretch reads GLEKRPNHSEDNP. The interval 61–92 is disordered; the sequence is GLEKRPNHSEDNPPSRGWTGEPGLDPRGEGPY. N-linked (GlcNAc...) asparagine glycosylation is found at Asn67, Asn122, and Asn196.

This sequence belongs to the strictosidine synthase family.

It localises to the vacuole. In Arabidopsis thaliana (Mouse-ear cress), this protein is Protein STRICTOSIDINE SYNTHASE-LIKE 1.